A 317-amino-acid chain; its full sequence is Transaldolase (317 aa).

Catalysis depends on Lys126, which acts as the Schiff-base intermediate with substrate.

The protein belongs to the transaldolase family. Type 1 subfamily. Homodimer.

The protein resides in the cytoplasm. The enzyme catalyses D-sedoheptulose 7-phosphate + D-glyceraldehyde 3-phosphate = D-erythrose 4-phosphate + beta-D-fructose 6-phosphate. The protein operates within carbohydrate degradation; pentose phosphate pathway; D-glyceraldehyde 3-phosphate and beta-D-fructose 6-phosphate from D-ribose 5-phosphate and D-xylulose 5-phosphate (non-oxidative stage): step 2/3. Functionally, transaldolase is important for the balance of metabolites in the pentose-phosphate pathway. The chain is Transaldolase from Burkholderia orbicola (strain AU 1054).